We begin with the raw amino-acid sequence, 271 residues long: Plasmanylethanolamine desaturase 1 (271 aa).

3 helical membrane-spanning segments follow: residues 48-68 (WCCV…LLLL), 75-95 (PLVM…SGLV), and 162-182 (VLEQ…FGTF). A Histidine box-1 motif is present at residues 187–191 (HKWSH). The Histidine box-2 motif lies at 214-218 (HHRIH).

It belongs to the fatty acid desaturase CarF family.

It is found in the endoplasmic reticulum membrane. The enzyme catalyses a 1-(1,2-saturated alkyl)-2-acyl-sn-glycero-3-phosphoethanolamine + 2 Fe(II)-[cytochrome b5] + O2 + 2 H(+) = a 1-O-(1Z-alkenyl)-2-acyl-sn-glycero-3-phosphoethanolamine + 2 Fe(III)-[cytochrome b5] + 2 H2O. The catalysed reaction is a 1-O-hexadecyl-2-acyl-sn-glycero-3-phosphoethanolamine + 2 Fe(II)-[cytochrome b5] + O2 + 2 H(+) = a 1-O-(1Z-hexadecenyl)-2-acyl-sn-glycero-3-phosphoethanolamine + 2 Fe(III)-[cytochrome b5] + 2 H2O. It carries out the reaction a 1-O-octadecyl-2-acyl-sn-glycero-3-phosphoethanolamine + 2 Fe(II)-[cytochrome b5] + O2 + 2 H(+) = a 1-O-(1Z-octadecenyl)-2-acyl-sn-glycero-3-phosphoethanolamine + 2 Fe(III)-[cytochrome b5] + 2 H2O. It catalyses the reaction a 1-O-(9Z-octadecenyl)-2-acyl-sn-glycero-3-phosphoethanolamine + 2 Fe(II)-[cytochrome b5] + O2 + 2 H(+) = a 1-O-(1Z,9Z-octadecadienyl)-2-acyl-sn-glycero-3-phosphoethanolamine + 2 Fe(III)-[cytochrome b5] + 2 H2O. Its pathway is lipid metabolism; fatty acid metabolism. Plasmanylethanolamine desaturase involved in plasmalogen biogenesis in the endoplasmic reticulum membrane. Plasmalogens are glycerophospholipids with a hydrocarbon chain linked by a vinyl ether bond at the glycerol sn-1 position, and are involved in antioxidative and signaling mechanisms. This chain is Plasmanylethanolamine desaturase 1, found in Bos taurus (Bovine).